The primary structure comprises 1024 residues: Gamma-tubulin complex component 5 (1024 aa).

3 disordered regions span residues 153–203 (IGLG…GGPQ), 523–545 (NEDK…SSRQ), and 853–873 (SQAK…GPPK). Residues 189-198 (TPLEEQDHNR) are compositionally biased toward basic and acidic residues. A compositionally biased stretch (low complexity) spans 529–543 (DSASASSGSDQGPSS). Residues 853-864 (SQAKEDIPRDQD) show a composition bias toward basic and acidic residues.

The protein belongs to the TUBGCP family. As to quaternary structure, component of the gamma-tubulin ring complex (gTuRC) consisting of TUBGCP2, TUBGCP3, TUBGCP4, TUBGCP5 and TUBGCP6 and gamma-tubulin TUBG1 or TUBG2. TUBGCP2, TUBGCP3, TUBGCP4, TUBGCP5 and TUBGCP6 assemble in a 5:5:2:1:1 stoichiometry; each is associated with a gamma-tubulin, thereby arranging 14 gamma-tubulins in a helical manner. Gamma-tubulin at the first position is blocked by TUBGCP3 at the last position, allowing 13 protafilaments to grow into a microtubule. The gTuRC (via TUBGCP3 and TUBGCP6) interacts with ACTB and MZT1; the interactions form a luminal bridge that stabilizes the initial structure during complex assembly. The gTuRC (via TUBGCP2) interacts with MZT2A/MZT2B and CDK5RAP2 (via CM1 motif); the interactions play a role in gTuRC activation.

The protein resides in the cytoplasm. It localises to the cytoskeleton. It is found in the microtubule organizing center. Its subcellular location is the centrosome. In terms of biological role, component of the gamma-tubulin ring complex (gTuRC) which mediates microtubule nucleation. The gTuRC regulates the minus-end nucleation of alpha-beta tubulin heterodimers that grow into microtubule protafilaments, a critical step in centrosome duplication and spindle formation. The sequence is that of Gamma-tubulin complex component 5 (Tubgcp5) from Mus musculus (Mouse).